A 305-amino-acid polypeptide reads, in one-letter code: UDP-3-O-acyl-N-acetylglucosamine deacetylase (305 aa).

Histidine 79, histidine 238, and aspartate 242 together coordinate Zn(2+). Histidine 265 functions as the Proton donor in the catalytic mechanism.

Belongs to the LpxC family. Zn(2+) serves as cofactor.

It catalyses the reaction a UDP-3-O-[(3R)-3-hydroxyacyl]-N-acetyl-alpha-D-glucosamine + H2O = a UDP-3-O-[(3R)-3-hydroxyacyl]-alpha-D-glucosamine + acetate. It participates in glycolipid biosynthesis; lipid IV(A) biosynthesis; lipid IV(A) from (3R)-3-hydroxytetradecanoyl-[acyl-carrier-protein] and UDP-N-acetyl-alpha-D-glucosamine: step 2/6. Functionally, catalyzes the hydrolysis of UDP-3-O-myristoyl-N-acetylglucosamine to form UDP-3-O-myristoylglucosamine and acetate, the committed step in lipid A biosynthesis. The protein is UDP-3-O-acyl-N-acetylglucosamine deacetylase of Salmonella agona (strain SL483).